The sequence spans 104 residues: Large ribosomal subunit protein bL21 (104 aa).

It belongs to the bacterial ribosomal protein bL21 family. In terms of assembly, part of the 50S ribosomal subunit. Contacts protein L20.

Its function is as follows. This protein binds to 23S rRNA in the presence of protein L20. In Streptococcus mutans serotype c (strain ATCC 700610 / UA159), this protein is Large ribosomal subunit protein bL21.